A 355-amino-acid polypeptide reads, in one-letter code: DNA polymerase IV (355 aa).

The UmuC domain occupies isoleucine 4–glycine 185. Mg(2+) is bound by residues aspartate 8 and aspartate 103. Residue glutamate 104 is part of the active site.

It belongs to the DNA polymerase type-Y family. As to quaternary structure, monomer. Mg(2+) is required as a cofactor.

The protein localises to the cytoplasm. It catalyses the reaction DNA(n) + a 2'-deoxyribonucleoside 5'-triphosphate = DNA(n+1) + diphosphate. Its function is as follows. Poorly processive, error-prone DNA polymerase involved in untargeted mutagenesis. Copies undamaged DNA at stalled replication forks, which arise in vivo from mismatched or misaligned primer ends. These misaligned primers can be extended by PolIV. Exhibits no 3'-5' exonuclease (proofreading) activity. May be involved in translesional synthesis, in conjunction with the beta clamp from PolIII. This Shewanella amazonensis (strain ATCC BAA-1098 / SB2B) protein is DNA polymerase IV.